Consider the following 545-residue polypeptide: Leucine-rich repeat LGI family member 2 (545 aa).

The N-terminal stretch at 1–28 (MALRRGGCGALGLLLLLLGAACLIPRSA) is a signal peptide. The region spanning 29–65 (QVRRLARCPATCSCTKESIICVGSSWVPRIVPGDISS) is the LRRNT domain. A glycan (N-linked (GlcNAc...) asparagine) is linked at Asn-70. LRR repeat units lie at residues 86–107 (SLQL…AFAG), 110–131 (HLEY…AFRG), and 134–155 (DLTH…VFSD). The LRRCT domain occupies 167–217 (NKFECDCKAKWLYLWLKMTNSTVSDVLCIGPPEYQEKKLNDVTSFDYECTT). A glycan (N-linked (GlcNAc...) asparagine) is linked at Asn-186. 7 EAR repeats span residues 219–261 (DFVV…EWDH), 265–307 (NFRS…KYDE), 311–358 (KFVK…KWNS), 360–403 (GFYS…QWNK), 407–450 (KFVP…RWNS), 452–494 (QFVE…QWDK), and 498–540 (LFKK…EHII). Asn-271 carries an N-linked (GlcNAc...) asparagine glycan. Asn-402 carries N-linked (GlcNAc...) asparagine glycosylation.

In terms of tissue distribution, brain, heart and placenta.

Its subcellular location is the secreted. In terms of biological role, required for the development of soma-targeting inhibitory GABAergic synapses made by parvalbumin-positive basket cells. The protein is Leucine-rich repeat LGI family member 2 (LGI2) of Homo sapiens (Human).